The sequence spans 309 residues: Genome polyprotein (309 aa).

Residues 1–40 (GFADLMGYIPLVGAPLGGAARALAHGVRVLEDGVNYATGN) lie on the Cytoplasmic side of the membrane. An important for lipid droplets localization region spans residues 36-39 (YATG). The helical transmembrane segment at 41 to 61 (LPGCSFSIFLLALLSCLTVPA) threads the bilayer. Positions 50-63 (LLALLSCLTVPASA) are cleaved as a propeptide — ER anchor for the core protein, removed in mature form by host signal peptidase. Topologically, residues 62–230 (SAYQVRNSSG…AGAHWGVLAG (169 aa)) are lumenal. Residues asparagine 68, asparagine 81, and asparagine 106 are each glycosylated (N-linked (GlcNAc...) asparagine; by host). Residues 137-168 (LVGSATLCSALYVGDLCGSVFLVGQLFTFSPR) are important for fusion. Asparagine 177 carries an N-linked (GlcNAc...) asparagine; by host glycan. The helical transmembrane segment at 231-251 (IAYFSMVGNWAKVLVVLLLFA) threads the bilayer. Residues 252–309 (GVDATTYTTGGNAARTTQALTSFFSPGAKQDIQLINTNGSWHINRTALNCNASLDTGW) lie on the Lumenal side of the membrane. The HVR1 stretch occupies residues 256–282 (TTYTTGGNAARTTQALTSFFSPGAKQD). Asparagine 289, asparagine 295, and asparagine 302 each carry an N-linked (GlcNAc...) (high mannose) asparagine; by host glycan.

It belongs to the hepacivirus polyprotein family. Homooligomer. Interacts with E1 (via C-terminus). Interacts with the non-structural protein 5A. Interacts (via N-terminus) with host STAT1 (via SH2 domain); this interaction results in decreased STAT1 phosphorylation and ubiquitin-mediated proteasome-dependent STAT1 degradation, leading to decreased IFN-stimulated gene transcription. Interacts with host STAT3; this interaction constitutively activates STAT3. Interacts with host LTBR receptor. Interacts with host TNFRSF1A receptor and possibly induces apoptosis. Interacts with host HNRPK. Interacts with host YWHAE. Interacts with host UBE3A/E6AP. Interacts with host DDX3X. Interacts with host APOA2. Interacts with host RXRA protein. Interacts with host SP110 isoform 3/Sp110b; this interaction sequesters the transcriptional corepressor SP110 away from the nucleus. Interacts with host CREB3 nuclear transcription protein; this interaction triggers cell transformation. Interacts with host ACY3. Interacts with host C1QR1. Interacts with host RBM24; this interaction, which enhances the interaction of the mature core protein with 5'-UTR, may inhibit viral translation and favor replication. Interacts with host EIF2AK2/PKR; this interaction induces the autophosphorylation of EIF2AK2. Part of the viral assembly initiation complex composed of NS2, E1, E2, NS3, NS4A, NS5A and the mature core protein. In terms of assembly, forms a heterodimer with envelope glycoprotein E2. Interacts with mature core protein. Interacts with protease NS2. The heterodimer E1/E2 interacts with host CLDN1; this interaction plays a role in viral entry into host cell. Interacts with host SPSB2 (via C-terminus). Part of the viral assembly initiation complex composed of NS2, E1, E2, NS3, NS4A, NS5A and the mature core protein. As to quaternary structure, forms a heterodimer with envelope glycoprotein E1. Interacts with host CD81 and SCARB1 receptors; these interactions play a role in viral entry into host cell. Interacts with host EIF2AK2/PKR; this interaction inhibits EIF2AK2 and probably allows the virus to evade the innate immune response. Interacts with host CD209/DC-SIGN and CLEC4M/DC-SIGNR. Interact with host SPCS1; this interaction is essential for viral particle assembly. Interacts with protease NS2. The heterodimer E1/E2 interacts with host CLDN1; this interaction plays a role in viral entry into host cell. Part of the viral assembly initiation complex composed of NS2, E1, E2, NS3, NS4A, NS5A and the mature core protein. In terms of processing, specific enzymatic cleavages in vivo yield mature proteins. The structural proteins, core, E1, E2 and p7 are produced by proteolytic processing by host signal peptidases. The core protein precursor is synthesized as a 23 kDa, which is retained in the ER membrane through the hydrophobic signal peptide. Cleavage by the signal peptidase releases the 21 kDa mature core protein. The cleavage of the core protein precursor occurs between aminoacids 176 and 188 but the exact cleavage site is not known. Some degraded forms of the core protein appear as well during the course of infection. The other proteins (p7, NS2, NS3, NS4A, NS4B, NS5A and NS5B) are cleaved by the viral proteases. Autoprocessing between NS2 and NS3 is mediated by the NS2 cysteine protease catalytic domain and regulated by the NS3 N-terminal domain. Phosphorylated by host PKC and PKA. Post-translationally, ubiquitinated; mediated by UBE3A and leading to core protein subsequent proteasomal degradation. In terms of processing, highly N-glycosylated.

The protein localises to the host endoplasmic reticulum membrane. It localises to the host mitochondrion membrane. It is found in the virion. Its subcellular location is the host cytoplasm. The protein resides in the host nucleus. The protein localises to the host lipid droplet. It localises to the virion membrane. Its function is as follows. Packages viral RNA to form a viral nucleocapsid, and promotes virion budding. Participates in the viral particle production as a result of its interaction with the non-structural protein 5A. Binds RNA and may function as a RNA chaperone to induce the RNA structural rearrangements taking place during virus replication. Modulates viral translation initiation by interacting with viral IRES and 40S ribosomal subunit. Affects various cell signaling pathways, host immunity and lipid metabolism. Prevents the establishment of cellular antiviral state by blocking the interferon-alpha/beta (IFN-alpha/beta) and IFN-gamma signaling pathways and by blocking the formation of phosphorylated STAT1 and promoting ubiquitin-mediated proteasome-dependent degradation of STAT1. Activates STAT3 leading to cellular transformation. Regulates the activity of cellular genes, including c-myc and c-fos. May repress the promoter of p53, and sequester CREB3 and SP110 isoform 3/Sp110b in the cytoplasm. Represses cell cycle negative regulating factor CDKN1A, thereby interrupting an important check point of normal cell cycle regulation. Targets transcription factors involved in the regulation of inflammatory responses and in the immune response: suppresses TNF-induced NF-kappa-B activation, and activates AP-1. Binds to dendritic cells (DCs) via C1QR1, resulting in down-regulation of T-lymphocytes proliferation. Alters lipid metabolism by interacting with hepatocellular proteins involved in lipid accumulation and storage. Induces up-regulation of FAS promoter activity, and thereby contributes to the increased triglyceride accumulation in hepatocytes (steatosis). In terms of biological role, forms a heterodimer with envelope glycoprotein E2, which mediates virus attachment to the host cell, virion internalization through clathrin-dependent endocytosis and fusion with host membrane. Fusion with the host cell is most likely mediated by both E1 and E2, through conformational rearrangements of the heterodimer required for fusion rather than a classical class II fusion mechanism. E1/E2 heterodimer binds host apolipoproteins such as APOB and ApoE thereby forming a lipo-viro-particle (LVP). APOE associated to the LVP allows the initial virus attachment to cell surface receptors such as the heparan sulfate proteoglycans (HSPGs), syndecan-1 (SDC1), syndecan-1 (SDC2), the low-density lipoprotein receptor (LDLR) and scavenger receptor class B type I (SCARB1). The cholesterol transfer activity of SCARB1 allows E2 exposure and binding of E2 to SCARB1 and the tetraspanin CD81. E1/E2 heterodimer binding on CD81 activates the epithelial growth factor receptor (EGFR) signaling pathway. Diffusion of the complex E1-E2-EGFR-SCARB1-CD81 to the cell lateral membrane allows further interaction with Claudin 1 (CLDN1) and occludin (OCLN) to finally trigger HCV entry. Functionally, forms a heterodimer with envelope glycoprotein E1, which mediates virus attachment to the host cell, virion internalization through clathrin-dependent endocytosis and fusion with host membrane. Fusion with the host cell is most likely mediated by both E1 and E2, through conformational rearrangements of the heterodimer required for fusion rather than a classical class II fusion mechanism. The interaction between envelope glycoprotein E2 and host apolipoprotein E/APOE allows the proper assembly, maturation and infectivity of the viral particles. This interaction is probably promoted via the up-regulation of cellular autophagy by the virus. E1/E2 heterodimer binds host apolipoproteins such as APOB and APOE thereby forming a lipo-viro-particle (LVP). APOE associated to the LVP allows the initial virus attachment to cell surface receptors such as the heparan sulfate proteoglycans (HSPGs), syndecan-1 (SDC1), syndecan-1 (SDC2), the low-density lipoprotein receptor (LDLR) and scavenger receptor class B type I (SCARB1). The cholesterol transfer activity of SCARB1 allows E2 exposure and binding of E2 to SCARB1 and the tetraspanin CD81. E1/E2 heterodimer binding on CD81 activates the epithelial growth factor receptor (EGFR) signaling pathway. Diffusion of the complex E1-E2-EGFR-SCARB1-CD81 to the cell lateral membrane allows further interaction with Claudin 1 (CLDN1) and occludin (OCLN) to finally trigger HCV entry. Inhibits host EIF2AK2/PKR activation, preventing the establishment of an antiviral state. Viral ligand for CD209/DC-SIGN and CLEC4M/DC-SIGNR, which are respectively found on dendritic cells (DCs), and on liver sinusoidal endothelial cells and macrophage-like cells of lymph node sinuses. These interactions allow the capture of circulating HCV particles by these cells and subsequent facilitated transmission to permissive cells such as hepatocytes and lymphocyte subpopulations. The sequence is that of Genome polyprotein from Hepatitis C virus (isolate HCT27) (HCV).